The sequence spans 343 residues: N-acetyl-gamma-glutamyl-phosphate reductase (343 aa).

Cys-148 is a catalytic residue.

The protein belongs to the NAGSA dehydrogenase family. Type 1 subfamily.

The protein resides in the cytoplasm. It carries out the reaction N-acetyl-L-glutamate 5-semialdehyde + phosphate + NADP(+) = N-acetyl-L-glutamyl 5-phosphate + NADPH + H(+). It participates in amino-acid biosynthesis; L-arginine biosynthesis; N(2)-acetyl-L-ornithine from L-glutamate: step 3/4. Functionally, catalyzes the NADPH-dependent reduction of N-acetyl-5-glutamyl phosphate to yield N-acetyl-L-glutamate 5-semialdehyde. The chain is N-acetyl-gamma-glutamyl-phosphate reductase from Caldicellulosiruptor bescii (strain ATCC BAA-1888 / DSM 6725 / KCTC 15123 / Z-1320) (Anaerocellum thermophilum).